The primary structure comprises 130 residues: Arsenical-resistance protein 2 (130 aa).

One can recognise a Rhodanese domain in the interval 17–124 (QRKDFQVVDL…WETHCRESNL (108 aa)).

Its function is as follows. Involved in resistance to arsenic compounds. The chain is Arsenical-resistance protein 2 (ARR2) from Saccharomyces cerevisiae (strain ATCC 204508 / S288c) (Baker's yeast).